Reading from the N-terminus, the 478-residue chain is GTPase Obg (478 aa).

The Obg domain maps to 2–159 (TTFVDRVELH…RDIVLELKTV (158 aa)). The interval 61–87 (HHSPHRKATNGQPGAGDNRSGKDGQDL) is disordered. The region spanning 160–330 (ADVALVGYPS…LSFALAGIIA (171 aa)) is the OBG-type G domain. GTP-binding positions include 166 to 173 (GYPSAGKS), 191 to 195 (FTTLV), 212 to 215 (DVPG), 282 to 285 (NKVD), and 311 to 313 (SAI). 2 residues coordinate Mg(2+): serine 173 and threonine 193. The OCT domain maps to 348 to 430 (PRAVDDAGFT…ENAVVFDWEP (83 aa)). Residues 436 to 478 (AEMLGRRGEDHRLEEPRPAAQRRRERDAERDDAEKEYDEFDPF) form a disordered region. A compositionally biased stretch (basic and acidic residues) spans 439 to 468 (LGRRGEDHRLEEPRPAAQRRRERDAERDDA). A compositionally biased stretch (acidic residues) spans 469-478 (EKEYDEFDPF).

The protein belongs to the TRAFAC class OBG-HflX-like GTPase superfamily. OBG GTPase family. Monomer. Requires Mg(2+) as cofactor.

The protein resides in the cytoplasm. Functionally, an essential GTPase which binds GTP, GDP and possibly (p)ppGpp with moderate affinity, with high nucleotide exchange rates and a fairly low GTP hydrolysis rate. Plays a role in control of the cell cycle, stress response, ribosome biogenesis and in those bacteria that undergo differentiation, in morphogenesis control. This is GTPase Obg from Streptomyces griseus subsp. griseus (strain JCM 4626 / CBS 651.72 / NBRC 13350 / KCC S-0626 / ISP 5235).